We begin with the raw amino-acid sequence, 580 residues long: (3S,6E)-nerolidol synthase 1, chloroplastic (580 aa).

Residues 1–31 (MASSSWAFFKVFNPQIAPKSISHIGQSDLMQ) constitute a chloroplast transit peptide. Residues Asp-334, Asp-338, Asp-478, Ser-482, and Glu-486 each contribute to the Mg(2+) site. A DDXXD motif motif is present at residues 334–338 (DDIFD).

The protein belongs to the terpene synthase family. Tpsg subfamily. The cofactor is Mg(2+). Requires Mn(2+) as cofactor.

It is found in the plastid. Its subcellular location is the chloroplast. The catalysed reaction is (2E,6E)-farnesyl diphosphate + H2O = (3S,6E)-nerolidol + diphosphate. It participates in secondary metabolite biosynthesis; terpenoid biosynthesis. Involved in monoterpene (C10) and sesquiterpene (C15) biosynthesis. Converts geranyl diphosphate (GPP) into S-linalool and farnesyl diphosphate (FPP) into (3S)-E-nerolidol. Probably not expressed in wild strawberry species. The polypeptide is (3S,6E)-nerolidol synthase 1, chloroplastic (Fragaria vesca (Woodland strawberry)).